The chain runs to 264 residues: MENLKKYLEVAKIAALAGGQVLKENFGKVKKENIEEKGEKDFVSYVDKTSEERIKEVILKFFPDHEVVGEEMGAEGSGSEYRWFIDPLDGTKNYINGFPIFAVSVGLVKGEEPIVGAVYLPYFDKLYWGAKGLGAYVNGKRIKVKDNESLKHAGVVYGFPSRSRRDISIYLNIFKDVFYEVGSMRRPGAAAVDLCMVAEGIFDGMMEFEMKPWDITAGLVILKEAGGVYTLVGEPFGVSDIIAGNKALHDFILQVAKKYMEVAV.

Residues Glu70, Asp86, Leu88, and Asp89 each coordinate Mg(2+). Residues 89 to 91, Arg185, and Ala190 each bind substrate; that span reads DGT. Asp214 provides a ligand contact to Mg(2+).

Belongs to the inositol monophosphatase superfamily. FBPase class 4 family. Requires Mg(2+) as cofactor.

It catalyses the reaction beta-D-fructose 1,6-bisphosphate + H2O = beta-D-fructose 6-phosphate + phosphate. It carries out the reaction a myo-inositol phosphate + H2O = myo-inositol + phosphate. Functionally, phosphatase with broad specificity; it can dephosphorylate fructose 1,6-bisphosphate, and both D and L isomers of inositol-1-phosphate (I-1-P). This Aquifex aeolicus (strain VF5) protein is Fructose-1,6-bisphosphatase/inositol-1-monophosphatase (suhB).